The chain runs to 358 residues: Ganglioside-induced differentiation-associated protein 1 (358 aa).

The 82-residue stretch at 24–105 folds into the GST N-terminal domain; sequence VKLILYHWTH…YLEQTFLDER (82 aa). Residues K50, K172, K173, K188, and K190 each participate in a glycyl lysine isopeptide (Lys-Gly) (interchain with G-Cter in ubiquitin) cross-link. Residues 153–309 form the GST C-terminal domain; it reads PAYATTRIRS…LISAVLPTAF (157 aa). K203 is subject to N6-acetyllysine; alternate. K203 is covalently cross-linked (Glycyl lysine isopeptide (Lys-Gly) (interchain with G-Cter in ubiquitin); alternate). Glycyl lysine isopeptide (Lys-Gly) (interchain with G-Cter in ubiquitin) cross-links involve residues K206, K207, and K214. A run of 2 helical transmembrane segments spans residues 292 to 312 and 320 to 340; these read VLGH…FRVA and LGTT…FMLF. The required for mitochondrial localization stretch occupies residues 320–358; that stretch reads LGTTLVVGLLAGVGYFAFMLFRKRLGSMILAFRPRPNYF.

Belongs to the GST superfamily. As to quaternary structure, homodimer. In terms of processing, ubiquitinated by PRKN during mitophagy, leading to its degradation and enhancement of mitophagy. Deubiquitinated by USP30. Highly expressed in whole brain and spinal cord. Predominant expression in central tissues of the nervous system not only in neurons but also in Schwann cells.

Its subcellular location is the mitochondrion outer membrane. The protein localises to the cytoplasm. Functionally, regulates the mitochondrial network by promoting mitochondrial fission. The chain is Ganglioside-induced differentiation-associated protein 1 (GDAP1) from Homo sapiens (Human).